A 310-amino-acid chain; its full sequence is NADH-cytochrome b5 reductase 1 (310 aa).

The chain crosses the membrane as a helical span at residues 30–50 (WVPFAVALAAGFVAWKLSVGG). An FAD-binding FR-type domain is found at 61 to 166 (NEFQNFVLKE…RGPKGAMVYT (106 aa)). Residues 146–160 (TTLK…RGPK) and 172–209 (HIGM…QVDL) each bind FAD.

It belongs to the flavoprotein pyridine nucleotide cytochrome reductase family. In terms of assembly, monomer. Component of the 2-(3-amino-3-carboxypropyl)histidine synthase complex composed of dph1, dph2, dph3 and a NADH-dependent reductase, predominantly cbr1. FAD serves as cofactor.

It is found in the mitochondrion outer membrane. It carries out the reaction 2 Fe(III)-[cytochrome b5] + NADH = 2 Fe(II)-[cytochrome b5] + NAD(+) + H(+). It catalyses the reaction 2 Fe(3+)-[Dph3] + NADH = 2 Fe(2+)-[Dph3] + NAD(+) + H(+). The protein operates within protein modification; peptidyl-diphthamide biosynthesis. Its function is as follows. NADH-dependent reductase for dph3 and cytochrome b5. Required for the first step of diphthamide biosynthesis, a post-translational modification of histidine which occurs in elongation factor 2. Dph1 and dph2 transfer a 3-amino-3-carboxypropyl (ACP) group from S-adenosyl-L-methionine (SAM) to a histidine residue, the reaction is assisted by a reduction system comprising dph3 and a NADH-dependent reductase, predominantly cbr1. By reducing dph3, also involved in the formation of the tRNA wobble base modification mcm5s 2U (5-methoxycarbonylmethyl-2-thiouridine), mediated by the elongator complex. The cytochrome b5/NADH cytochrome b5 reductase electron transfer system supports the catalytic activity of several sterol biosynthetic enzymes. The sequence is that of NADH-cytochrome b5 reductase 1 (cbr1) from Emericella nidulans (strain FGSC A4 / ATCC 38163 / CBS 112.46 / NRRL 194 / M139) (Aspergillus nidulans).